Consider the following 81-residue polypeptide: Beta-toxin Ct13 (81 aa).

The N-terminal stretch at 1 to 18 (MKVLILIIASVLLIGVEC) is a signal peptide. The LCN-type CS-alpha/beta domain maps to 19–78 (KDGFPVDSEGCILLPCATRAYCSVNCKFMKGSGGSCDTLACHCKGLPEDAKVQDKPTNKC). Disulfide bonds link C29–C78, C34–C54, C40–C59, and C44–C61. Position 78 is a cysteine amide (C78).

Belongs to the long (4 C-C) scorpion toxin superfamily. Sodium channel inhibitor family. Beta subfamily. As to expression, expressed by the venom gland.

The protein localises to the secreted. Its function is as follows. Beta toxins bind voltage-independently at site-4 of sodium channels (Nav) and shift the voltage of activation toward more negative potentials thereby affecting sodium channel activation and promoting spontaneous and repetitive firing. This Centruroides tecomanus (Scorpion) protein is Beta-toxin Ct13.